The primary structure comprises 244 residues: Pyridoxine 5'-phosphate synthase (244 aa).

Asn7 serves as a coordination point for 3-amino-2-oxopropyl phosphate. A 1-deoxy-D-xylulose 5-phosphate-binding site is contributed by 9–10; sequence DH. Arg18 serves as a coordination point for 3-amino-2-oxopropyl phosphate. His43 serves as the catalytic Proton acceptor. 1-deoxy-D-xylulose 5-phosphate contacts are provided by Arg45 and His50. Residue Glu70 is the Proton acceptor of the active site. 1-deoxy-D-xylulose 5-phosphate is bound at residue Thr100. His191 acts as the Proton donor in catalysis. 3-amino-2-oxopropyl phosphate is bound by residues Gly192 and 213-214; that span reads GH.

Belongs to the PNP synthase family. As to quaternary structure, homooctamer; tetramer of dimers.

Its subcellular location is the cytoplasm. The enzyme catalyses 3-amino-2-oxopropyl phosphate + 1-deoxy-D-xylulose 5-phosphate = pyridoxine 5'-phosphate + phosphate + 2 H2O + H(+). The protein operates within cofactor biosynthesis; pyridoxine 5'-phosphate biosynthesis; pyridoxine 5'-phosphate from D-erythrose 4-phosphate: step 5/5. In terms of biological role, catalyzes the complicated ring closure reaction between the two acyclic compounds 1-deoxy-D-xylulose-5-phosphate (DXP) and 3-amino-2-oxopropyl phosphate (1-amino-acetone-3-phosphate or AAP) to form pyridoxine 5'-phosphate (PNP) and inorganic phosphate. This chain is Pyridoxine 5'-phosphate synthase, found in Laribacter hongkongensis (strain HLHK9).